Here is a 93-residue protein sequence, read N- to C-terminus: DNA-binding protein Fis (93 aa).

Positions 74–93 (QTRAALMMGINRGTLRKKLK) form a DNA-binding region, H-T-H motif.

This sequence belongs to the transcriptional regulatory Fis family. Homodimer.

Its function is as follows. Activates ribosomal RNA transcription. Plays a direct role in upstream activation of rRNA promoters. This Klebsiella pneumoniae protein is DNA-binding protein Fis.